The following is a 309-amino-acid chain: Porphobilinogen deaminase (309 aa).

The residue at position 242 (C242) is an S-(dipyrrolylmethanemethyl)cysteine.

It belongs to the HMBS family. In terms of assembly, monomer. The cofactor is dipyrromethane.

The enzyme catalyses 4 porphobilinogen + H2O = hydroxymethylbilane + 4 NH4(+). It participates in porphyrin-containing compound metabolism; protoporphyrin-IX biosynthesis; coproporphyrinogen-III from 5-aminolevulinate: step 2/4. Its function is as follows. Tetrapolymerization of the monopyrrole PBG into the hydroxymethylbilane pre-uroporphyrinogen in several discrete steps. This chain is Porphobilinogen deaminase, found in Legionella pneumophila (strain Paris).